We begin with the raw amino-acid sequence, 770 residues long: PH and SEC7 domain-containing protein 2 (770 aa).

Residues 1–24 (MDEEKLPCELHKEGSATQEDHGLE) show a composition bias toward basic and acidic residues. Disordered stretches follow at residues 1-65 (MDEE…RGPD) and 181-304 (IQQR…ANGC). The segment covering 32–45 (QNGTAASEGLSSHI) has biased composition (polar residues). Position 188 is a phosphoserine (serine 188). Composition is skewed to low complexity over residues 216 to 234 (LGSPLRRSISSSRSENVLS) and 285 to 296 (ELSSSEGLEPGS). Positions 256–459 (DDEDDEDTDK…KTLYNSIKNE (204 aa)) constitute an SEC7 domain. Residues 509-622 (TTYKHGVLTR…WILRINLVAA (114 aa)) form the PH domain. The chain crosses the membrane as a helical span at residues 619–636 (LVAAIFSAPAFPAAVSSM). The stretch at 650-677 (RLCQEEQLRSHENKLRQVTAELAEHRCH) forms a coiled coil. A disordered region spans residues 738 to 770 (PALRKTHSSPALSLGHGPVTGSKATKDTSASDT).

It belongs to the PSD family.

Its subcellular location is the cell membrane. It is found in the cell projection. The protein resides in the ruffle membrane. It localises to the cleavage furrow. The chain is PH and SEC7 domain-containing protein 2 (Psd2) from Mus musculus (Mouse).